The chain runs to 277 residues: MSSHPIRSQYEDFLRHVSTHGVFKADRTGTGTTSVFGYQMRFDLNEGFPLVTTKKVFLKAIVLELLWFLRGDSNVKWLQERGCTIWDEWARPDGDLGPVYGVQWRSWPTPDGGHIDQIAEAIKTLKTNPDSRRIIVSAWNVAELDKMALMPCHAFFQFYVAPAQTPGGKGKLSCQLYQRSADIFLGVPFNIASYALLTHMVAQQCDLDVGDFIWTGGDCHVYSNHAEQVALQLSRTPFAYPTLSIKRKPASIFDYAYEDFEVLGYECHPAIKAPVAV.

DUMP-binding positions include Arg27 and 132–133; that span reads RR. Cys152 acts as the Nucleophile in catalysis. Residues 179–182, Asn190, and 220–222 contribute to the dUMP site; these read RSAD and HVY. Asp182 lines the (6R)-5,10-methylene-5,6,7,8-tetrahydrofolate pocket. Ala276 serves as a coordination point for (6R)-5,10-methylene-5,6,7,8-tetrahydrofolate.

The protein belongs to the thymidylate synthase family. Bacterial-type ThyA subfamily. As to quaternary structure, homodimer.

Its subcellular location is the cytoplasm. It catalyses the reaction dUMP + (6R)-5,10-methylene-5,6,7,8-tetrahydrofolate = 7,8-dihydrofolate + dTMP. It functions in the pathway pyrimidine metabolism; dTTP biosynthesis. Its function is as follows. Catalyzes the reductive methylation of 2'-deoxyuridine-5'-monophosphate (dUMP) to 2'-deoxythymidine-5'-monophosphate (dTMP) while utilizing 5,10-methylenetetrahydrofolate (mTHF) as the methyl donor and reductant in the reaction, yielding dihydrofolate (DHF) as a by-product. This enzymatic reaction provides an intracellular de novo source of dTMP, an essential precursor for DNA biosynthesis. In Albidiferax ferrireducens (strain ATCC BAA-621 / DSM 15236 / T118) (Rhodoferax ferrireducens), this protein is Thymidylate synthase.